The primary structure comprises 183 residues: Probable apo-citrate lyase phosphoribosyl-dephospho-CoA transferase (183 aa).

The protein belongs to the CitX family.

It catalyses the reaction apo-[citrate lyase ACP] + 2'-(5''-triphospho-alpha-D-ribosyl)-3'-dephospho-CoA = holo-[citrate lyase ACP] + diphosphate. Functionally, transfers 2-(5''-triphosphoribosyl)-3'-dephosphocoenzyme-A on a serine residue to the apo-acyl carrier protein (gamma chain) of the citrate lyase to yield holo-acyl carrier protein. The sequence is that of Probable apo-citrate lyase phosphoribosyl-dephospho-CoA transferase from Escherichia coli (strain 55989 / EAEC).